The sequence spans 243 residues: Pyridoxine 5'-phosphate synthase (243 aa).

Residue Asn7 participates in 3-amino-2-oxopropyl phosphate binding. Residue 9–10 participates in 1-deoxy-D-xylulose 5-phosphate binding; sequence DH. Arg18 provides a ligand contact to 3-amino-2-oxopropyl phosphate. His43 functions as the Proton acceptor in the catalytic mechanism. 2 residues coordinate 1-deoxy-D-xylulose 5-phosphate: Arg45 and His50. The active-site Proton acceptor is the Glu70. Thr100 contributes to the 1-deoxy-D-xylulose 5-phosphate binding site. The active-site Proton donor is the His190. 3-amino-2-oxopropyl phosphate is bound by residues Gly191 and 212–213; that span reads GH.

Belongs to the PNP synthase family. Homooctamer; tetramer of dimers.

The protein localises to the cytoplasm. The catalysed reaction is 3-amino-2-oxopropyl phosphate + 1-deoxy-D-xylulose 5-phosphate = pyridoxine 5'-phosphate + phosphate + 2 H2O + H(+). Its pathway is cofactor biosynthesis; pyridoxine 5'-phosphate biosynthesis; pyridoxine 5'-phosphate from D-erythrose 4-phosphate: step 5/5. Functionally, catalyzes the complicated ring closure reaction between the two acyclic compounds 1-deoxy-D-xylulose-5-phosphate (DXP) and 3-amino-2-oxopropyl phosphate (1-amino-acetone-3-phosphate or AAP) to form pyridoxine 5'-phosphate (PNP) and inorganic phosphate. This Prochlorococcus marinus (strain MIT 9211) protein is Pyridoxine 5'-phosphate synthase.